The sequence spans 150 residues: UPF0102 protein sll0189 (150 aa).

Belongs to the UPF0102 family.

The chain is UPF0102 protein sll0189 from Synechocystis sp. (strain ATCC 27184 / PCC 6803 / Kazusa).